A 408-amino-acid chain; its full sequence is Centromere protein U (408 aa).

Positions 1–33 (DRPRPARLSHARFSKNHSGRTHSMKDKAGRKHR) are enriched in basic residues. The segment at 1–218 (DRPRPARLSH…GKRKKPRSYT (218 aa)) is disordered. Thr72 carries the phosphothreonine; by PLK1 modification. Thr92 is modified (phosphothreonine). Positions 94–103 (QEKEAKRSSD) are enriched in basic and acidic residues. Residue Ser102 is modified to Phosphoserine. Thr104 bears the Phosphothreonine mark. Ser105, Ser110, and Ser114 each carry phosphoserine. Residues 118–127 (SAKKPRRKLK) show a composition bias toward basic residues. Phosphoserine occurs at positions 130, 133, and 135. Residues 176 to 186 (PQKTGPQSAES) are compositionally biased toward polar residues. A Glycyl lysine isopeptide (Lys-Gly) (interchain with G-Cter in SUMO2) cross-link involves residue Lys178. A phosphoserine mark is found at Ser183 and Ser187. Thr192 carries the post-translational modification Phosphothreonine. Ser222 is modified (phosphoserine). Positions 273–350 (SNLKEELIKM…LRKAAYFLSN (78 aa)) form a coiled coil. The Nuclear localization signal signature appears at 293–310 (KRKNAKIISNIEKKRQRL).

Belongs to the CENP-U/AME1 family. In terms of assembly, component of the CENPA-NAC complex, at least composed of CENPA, CENPC, CENPH, CENPM, CENPN, CENPT and CENPU. The CENPA-NAC complex interacts with the CENPA-CAD complex, composed of CENPI, CENPK, CENPL, CENPO, CENPP, CENPQ, CENPR and CENPS. Interacts with MLF1. Phosphorylated by PLK1 at Thr-72, creating a self-tethering site that specifically interacts with the polo-box domain of PLK1.

It is found in the cytoplasm. It localises to the nucleus. Its subcellular location is the chromosome. The protein resides in the centromere. The protein localises to the kinetochore. Its function is as follows. Component of the CENPA-NAC (nucleosome-associated) complex, a complex that plays a central role in assembly of kinetochore proteins, mitotic progression and chromosome segregation. The CENPA-NAC complex recruits the CENPA-CAD (nucleosome distal) complex and may be involved in incorporation of newly synthesized CENPA into centromeres. Plays an important role in the correct PLK1 localization to the mitotic kinetochores. A scaffold protein responsible for the initial recruitment and maintenance of the kinetochore PLK1 population until its degradation. Involved in transcriptional repression. In Bos taurus (Bovine), this protein is Centromere protein U (CENPU).